We begin with the raw amino-acid sequence, 574 residues long: Envelope glycoprotein (574 aa).

Residues 1 to 22 form the signal peptide; sequence MTLKDIPFWRVLLIFQTARVYA. Residues 23–514 are Extracellular-facing; it reads GFGDPREAIT…TGLHGLLPYL (492 aa). 2 N-linked (GlcNAc...) asparagine; by host glycosylation sites follow: Asn-117 and Asn-233. The CXXC signature appears at 243–246; sequence CWLC. Disulfide bonds link Cys-243-Cys-246, Cys-243-Cys-471, and Cys-463-Cys-470. 8 N-linked (GlcNAc...) asparagine; by host glycosylation sites follow: Asn-260, Asn-267, Asn-288, Asn-298, Asn-312, Asn-318, Asn-327, and Asn-345. The interval 386–406 is fusion peptide; it reads FIPLLVGLGITTAVSTGTAGL. 2 coiled-coil regions span residues 407–457 and 467–503; these read GYSI…LLTA and QEKCCFYANKSGIVRDKIKRLQEDLEKRRKEIIDNPF. Residues 446–462 form an immunosuppression region; that stretch reads LQNRRGLDLLTAEQGGI. Residues 463 to 471 carry the CX6CC motif; sequence CLALQEKCC. Asn-475 carries N-linked (GlcNAc...) asparagine; by host glycosylation. The chain crosses the membrane as a helical span at residues 515–535; it reads LPLLGPLFCLLLLITFGPLIF. Residues 536 to 574 are Cytoplasmic-facing; the sequence is NKIITFVKQQIDAIQAKPIQVHYHRLEQEDNGGVYLRVS. The short motif at 558–561 is the YXXL motif; contains endocytosis signal element; that stretch reads YHRL.

The mature envelope protein (Env) consists of a trimer of SU-TM heterodimers attached by a labile interchain disulfide bond. Specific enzymatic cleavages in vivo yield mature proteins. Envelope glycoproteins are synthesized as an inactive precursor that is N-glycosylated and processed likely by host cell furin or by a furin-like protease in the Golgi to yield the mature SU and TM proteins. The cleavage site between SU and TM requires the minimal sequence [KR]-X-[KR]-R. The R-peptide is released from the C-terminus of the cytoplasmic tail of the TM protein upon particle formation as a result of proteolytic cleavage by the viral protease. Cleavage of this peptide is required for TM to become fusogenic. Post-translationally, the CXXC motif is highly conserved across a broad range of retroviral envelope proteins. It is thought to participate in the formation of a labile disulfide bond possibly with the CX6CC motif present in the transmembrane protein. Isomerization of the intersubunit disulfide bond to an SU intrachain disulfide bond is thought to occur upon receptor recognition in order to allow membrane fusion.

The protein resides in the virion membrane. It is found in the host cell membrane. The surface protein (SU) attaches the virus to the host cell by binding to its receptor. This interaction triggers the refolding of the transmembrane protein (TM) and is thought to activate its fusogenic potential by unmasking its fusion peptide. Fusion occurs at the host cell plasma membrane. Its function is as follows. The transmembrane protein (TM) acts as a class I viral fusion protein. Under the current model, the protein has at least 3 conformational states: pre-fusion native state, pre-hairpin intermediate state, and post-fusion hairpin state. During viral and target cell membrane fusion, the coiled coil regions (heptad repeats) assume a trimer-of-hairpins structure, positioning the fusion peptide in close proximity to the C-terminal region of the ectodomain. The formation of this structure appears to drive apposition and subsequent fusion of viral and target cell membranes. Membranes fusion leads to delivery of the nucleocapsid into the cytoplasm. In Macaca mulatta (Rhesus macaque), this protein is Envelope glycoprotein (env).